The following is a 91-amino-acid chain: Large ribosomal subunit protein uL23c (91 aa).

Belongs to the universal ribosomal protein uL23 family. As to quaternary structure, part of the 50S ribosomal subunit.

It localises to the plastid. The protein resides in the chloroplast. Its function is as follows. Binds to 23S rRNA. This chain is Large ribosomal subunit protein uL23c (rpl23), found in Picea abies (Norway spruce).